A 214-amino-acid chain; its full sequence is NAD(P)H-quinone oxidoreductase subunit 5, chloroplastic (214 aa).

The next 2 membrane-spanning stretches (helical) occupy residues 84-104 (LFPL…GIPF) and 152-172 (SLAI…YSFF).

Belongs to the complex I subunit 5 family. As to quaternary structure, NDH is composed of at least 16 different subunits, 5 of which are encoded in the nucleus.

The protein resides in the plastid. It is found in the chloroplast thylakoid membrane. The enzyme catalyses a plastoquinone + NADH + (n+1) H(+)(in) = a plastoquinol + NAD(+) + n H(+)(out). It carries out the reaction a plastoquinone + NADPH + (n+1) H(+)(in) = a plastoquinol + NADP(+) + n H(+)(out). Its function is as follows. NDH shuttles electrons from NAD(P)H:plastoquinone, via FMN and iron-sulfur (Fe-S) centers, to quinones in the photosynthetic chain and possibly in a chloroplast respiratory chain. The immediate electron acceptor for the enzyme in this species is believed to be plastoquinone. Couples the redox reaction to proton translocation, and thus conserves the redox energy in a proton gradient. This chain is NAD(P)H-quinone oxidoreductase subunit 5, chloroplastic (ndhF), found in Brachypodium sylvaticum (False brome).